Here is a 194-residue protein sequence, read N- to C-terminus: Peptidyl-tRNA hydrolase (194 aa).

Tyrosine 17 provides a ligand contact to tRNA. Histidine 22 serves as the catalytic Proton acceptor. Residues tyrosine 68, asparagine 70, and asparagine 116 each coordinate tRNA.

This sequence belongs to the PTH family. As to quaternary structure, monomer.

The protein localises to the cytoplasm. It catalyses the reaction an N-acyl-L-alpha-aminoacyl-tRNA + H2O = an N-acyl-L-amino acid + a tRNA + H(+). Functionally, hydrolyzes ribosome-free peptidyl-tRNAs (with 1 or more amino acids incorporated), which drop off the ribosome during protein synthesis, or as a result of ribosome stalling. Catalyzes the release of premature peptidyl moieties from peptidyl-tRNA molecules trapped in stalled 50S ribosomal subunits, and thus maintains levels of free tRNAs and 50S ribosomes. This chain is Peptidyl-tRNA hydrolase, found in Pseudomonas putida (strain GB-1).